A 220-amino-acid chain; its full sequence is Endonuclease NucS (220 aa).

It belongs to the NucS endonuclease family.

The protein resides in the cytoplasm. In terms of biological role, cleaves both 3' and 5' ssDNA extremities of branched DNA structures. This chain is Endonuclease NucS, found in Parafrankia sp. (strain EAN1pec).